A 420-amino-acid chain; its full sequence is MDAQAYLLQLGQAAKSSGFALANLGVMAKNRLLGRVAAELKSAFDEILAANAKDVAAARASGLGDAMVDRLLLNDDRLKGIIADIDNVISLADPIGEEFDSRLLDNGMRLCRRRVPLGVIGVIYEARPNVTVEIAVLALKTGNAVILRGGKETLESNLALAAAIRRALAGEGLPEDCVQLIDNPDRALVTGLLKLDKFVDMIVPRGGQGLQRLCAEQATIPVILGGIGICHLYLDRDADISRAANVIINAKVQRPTVCNALDTLLIHRDKLDWLPTLARALQQQGVKLVACEQSLGALAAAGIEAEAASDESFGTEWLSLTLGVKVVADIDEAIAHIRHYSSGHSEAILTDNLAAATHFMNEVNSAAVYLNASTRFTDGGQFGFGAEVAVSTQKLHARGPMGLEALTTYKWLGVGDYSCR.

Belongs to the gamma-glutamyl phosphate reductase family.

The protein localises to the cytoplasm. It carries out the reaction L-glutamate 5-semialdehyde + phosphate + NADP(+) = L-glutamyl 5-phosphate + NADPH + H(+). The protein operates within amino-acid biosynthesis; L-proline biosynthesis; L-glutamate 5-semialdehyde from L-glutamate: step 2/2. Catalyzes the NADPH-dependent reduction of L-glutamate 5-phosphate into L-glutamate 5-semialdehyde and phosphate. The product spontaneously undergoes cyclization to form 1-pyrroline-5-carboxylate. The polypeptide is Gamma-glutamyl phosphate reductase (Shewanella amazonensis (strain ATCC BAA-1098 / SB2B)).